The chain runs to 209 residues: High-affinity nitrate transporter 3.2 (209 aa).

The first 22 residues, 1-22 (MAIHTLLFVSLLIFSLIESSSG), serve as a signal peptide directing secretion. Residues 177–197 (LDIASTFFSVFSVVSLFVFFV) traverse the membrane as a helical segment.

This sequence belongs to the NAR2 family. In terms of tissue distribution, bearly detected in roots and shoots.

The protein localises to the cell membrane. Functionally, acts as a dual component transporter with NTR2.1. Required for high-affinity nitrate transport. The chain is High-affinity nitrate transporter 3.2 from Arabidopsis thaliana (Mouse-ear cress).